The following is a 979-amino-acid chain: MHC class II regulatory factor RFX1 (979 aa).

3 disordered regions span residues 1 to 136 (MATQ…QVVQ), 181 to 227 (QSAA…PTGT), and 370 to 405 (TSTGAGASNSSGGGGSGGGGGGGGGGGGGGSGSTGG). The span at 12 to 44 (APPPSQPPQAPPQAQPQPPPPPPPAAPQPPQPP) shows a compositional bias: pro residues. The span at 45 to 73 (TAAATPQPQYVTELQSPQPQAQPPGGQKQ) shows a compositional bias: low complexity. Ser60 carries the post-translational modification Phosphoserine. Pro residues predominate over residues 81-96 (VPAPSQPTGAPTPSPA). Positions 114-126 (ETVSEASPGSTAS) are enriched in polar residues. Over residues 127 to 136 (QTGVPTQVVQ) the composition is skewed to low complexity. 2 stretches are compositionally biased toward polar residues: residues 190–203 (GQVSLTVHGTQQVH) and 209–220 (SPVQANSSSSKT). The span at 370–379 (TSTGAGASNS) shows a compositional bias: low complexity. Over residues 380–405 (SGGGGSGGGGGGGGGGGGGGSGSTGG) the composition is skewed to gly residues. The RFX-type winged-helix DNA-binding region spans 438-513 (TVQWLLDNYE…YHYYGLRIKA (76 aa)). Positions 744–979 (FAQTLRRYTS…GLFVQALPSS (236 aa)) are necessary for dimerization. The interval 915–960 (SLNPLDPDKDEEEEEEEESEDELPQDISLAAGGESPALGPETLEPP) is disordered. A compositionally biased stretch (acidic residues) spans 922–938 (DKDEEEEEEEESEDELP). Residues Ser978 and Ser979 each carry the phosphoserine modification.

The protein belongs to the RFX family. In terms of assembly, homodimer; binds DNA as a homodimer. Heterodimer; heterodimerizes with RFX2 and RFX3.

The protein resides in the nucleus. Regulatory factor essential for MHC class II genes expression. Binds to the X boxes of MHC class II genes. Also binds to an inverted repeat (ENH1) required for hepatitis B virus genes expression and to the most upstream element (alpha) of the RPL30 promoter. The polypeptide is MHC class II regulatory factor RFX1 (RFX1) (Homo sapiens (Human)).